Consider the following 60-residue polypeptide: Large ribosomal subunit protein uL30 (60 aa).

Belongs to the universal ribosomal protein uL30 family. Part of the 50S ribosomal subunit.

The protein is Large ribosomal subunit protein uL30 of Desulfotalea psychrophila (strain LSv54 / DSM 12343).